We begin with the raw amino-acid sequence, 1230 residues long: ABC transporter B family member 5 (1230 aa).

The next 6 helical transmembrane spans lie at Val27–Met47, Leu78–Ile98, Phe154–Leu174, Leu177–Val197, Gly253–Leu273, and Gly286–Leu306. The ABC transmembrane type-1 1 domain occupies Met30 to Ala318. One can recognise an ABC transporter 1 domain in the interval Ile353 to Arg589. Gly388–Ser395 is an ATP binding site. N-linked (GlcNAc...) asparagine glycosylation is found at Asn540, Asn615, and Asn616. A disordered region spans residues Ile602–Asp621. Low complexity predominate over residues Ser603–Ser617. A run of 2 helical transmembrane segments spans residues Ile662 to Ile682 and Met707 to Phe727. The region spanning Leu663–Lys950 is the ABC transmembrane type-1 2 domain. A glycan (N-linked (GlcNAc...) asparagine) is linked at Asn759. 3 helical membrane-spanning segments follow: residues Ile798 to Ile818, Gly889 to Val909, and Val924 to Phe944. Residues Ile985 to Gln1223 form the ABC transporter 2 domain. ATP is bound at residue Gly1020–Ser1027. Asn1074, Asn1174, and Asn1227 each carry an N-linked (GlcNAc...) asparagine glycan.

The protein belongs to the ABC transporter superfamily. ABCB family. Multidrug resistance exporter (TC 3.A.1.201) subfamily.

It localises to the membrane. The polypeptide is ABC transporter B family member 5 (ABCB5) (Arabidopsis thaliana (Mouse-ear cress)).